The primary structure comprises 198 residues: Type II secretion system protein J (198 aa).

Residues 1–7 constitute a propeptide, leader sequence; it reads MIRRSSG. At Phe-8 the chain carries N-methylphenylalanine. The helical transmembrane segment at 8–28 threads the bilayer; that stretch reads FTLVEMLLALAILAALSVAAV.

This sequence belongs to the GSP J family. Type II secretion is composed of four main components: the outer membrane complex, the inner membrane complex, the cytoplasmic secretion ATPase and the periplasm-spanning pseudopilus. Interacts with core component PulG. Post-translationally, cleaved by prepilin peptidase. Methylated by prepilin peptidase at the amino group of the N-terminal phenylalanine once the leader sequence is cleaved by prepilin peptidase.

It localises to the cell inner membrane. Functionally, component of the type II secretion system required for the energy-dependent secretion of extracellular factors such as proteases and toxins from the periplasm. Part of the pseudopilus tip complex that is critical for the recognition and binding of secretion substrates. The chain is Type II secretion system protein J (pulJ) from Klebsiella pneumoniae.